A 556-amino-acid polypeptide reads, in one-letter code: Glutamine--tRNA ligase (556 aa).

Residues proline 35–histidine 45 carry the 'HIGH' region motif. Residues glutamate 36–asparagine 38 and histidine 42–serine 48 contribute to the ATP site. L-glutamine is bound by residues aspartate 68 and tyrosine 213. ATP-binding positions include threonine 232 and arginine 262 to leucine 263. The 'KMSKS' region signature appears at valine 269–arginine 273.

This sequence belongs to the class-I aminoacyl-tRNA synthetase family. In terms of assembly, monomer.

The protein resides in the cytoplasm. It carries out the reaction tRNA(Gln) + L-glutamine + ATP = L-glutaminyl-tRNA(Gln) + AMP + diphosphate. The chain is Glutamine--tRNA ligase from Pseudomonas aeruginosa (strain ATCC 15692 / DSM 22644 / CIP 104116 / JCM 14847 / LMG 12228 / 1C / PRS 101 / PAO1).